The primary structure comprises 644 residues: Chaperone protein HscA (644 aa).

The protein belongs to the heat shock protein 70 family.

Chaperone involved in the maturation of iron-sulfur cluster-containing proteins. Has a low intrinsic ATPase activity which is markedly stimulated by HscB. Involved in the maturation of IscU. The protein is Chaperone protein HscA of Yersinia pseudotuberculosis serotype I (strain IP32953).